The chain runs to 426 residues: Enolase (426 aa).

A (2R)-2-phosphoglycerate-binding site is contributed by Q165. E207 serves as the catalytic Proton donor. Residues D244, E285, and D312 each contribute to the Mg(2+) site. Positions 337, 366, 367, and 388 each coordinate (2R)-2-phosphoglycerate. The active-site Proton acceptor is K337.

The protein belongs to the enolase family. Mg(2+) serves as cofactor.

The protein resides in the cytoplasm. Its subcellular location is the secreted. The protein localises to the cell surface. The catalysed reaction is (2R)-2-phosphoglycerate = phosphoenolpyruvate + H2O. It functions in the pathway carbohydrate degradation; glycolysis; pyruvate from D-glyceraldehyde 3-phosphate: step 4/5. Catalyzes the reversible conversion of 2-phosphoglycerate (2-PG) into phosphoenolpyruvate (PEP). It is essential for the degradation of carbohydrates via glycolysis. The polypeptide is Enolase (Cyanothece sp. (strain PCC 7425 / ATCC 29141)).